The following is a 795-amino-acid chain: Phenylalanine--tRNA ligase beta subunit (795 aa).

A tRNA-binding domain is found at 39–148 (AGAFHGVVVG…ADAPIGTDIR (110 aa)). Residues 401–476 (PTRATITLRR…RIYGYNNIPN (76 aa)) form the B5 domain. The Mg(2+) site is built by Asp454, Asp460, Glu463, and Glu464. The region spanning 701-794 (SRFPANRRDI…LKQRFQASLR (94 aa)) is the FDX-ACB domain.

The protein belongs to the phenylalanyl-tRNA synthetase beta subunit family. Type 1 subfamily. Tetramer of two alpha and two beta subunits. Requires Mg(2+) as cofactor.

It is found in the cytoplasm. It carries out the reaction tRNA(Phe) + L-phenylalanine + ATP = L-phenylalanyl-tRNA(Phe) + AMP + diphosphate + H(+). The polypeptide is Phenylalanine--tRNA ligase beta subunit (Pectobacterium atrosepticum (strain SCRI 1043 / ATCC BAA-672) (Erwinia carotovora subsp. atroseptica)).